We begin with the raw amino-acid sequence, 278 residues long: Large ribosomal subunit protein uL2 (278 aa).

The interval 224–278 is disordered; it reads VAMNPVDHPHGGGEGRTSGGRNPVTPWGVPTKGKKTRSNKRTDTFILSSRHNRKK.

This sequence belongs to the universal ribosomal protein uL2 family. As to quaternary structure, part of the 50S ribosomal subunit. Forms a bridge to the 30S subunit in the 70S ribosome.

In terms of biological role, one of the primary rRNA binding proteins. Required for association of the 30S and 50S subunits to form the 70S ribosome, for tRNA binding and peptide bond formation. It has been suggested to have peptidyltransferase activity; this is somewhat controversial. Makes several contacts with the 16S rRNA in the 70S ribosome. This Methylorubrum extorquens (strain CM4 / NCIMB 13688) (Methylobacterium extorquens) protein is Large ribosomal subunit protein uL2.